The chain runs to 123 residues: MTREEIIEAIKGMSVLELNELVKACEEEFGVSAAAPVAVAGAAGAAGAAAGEEKTEFDVVLAEAGAKKLQVIKVVRELTGLGLKDAKALVDGAPKTIKEGVAKEEAESMKAKIEEAGGKVELK.

The protein belongs to the bacterial ribosomal protein bL12 family. In terms of assembly, homodimer. Part of the ribosomal stalk of the 50S ribosomal subunit. Forms a multimeric L10(L12)X complex, where L10 forms an elongated spine to which 2 to 4 L12 dimers bind in a sequential fashion. Binds GTP-bound translation factors.

Its function is as follows. Forms part of the ribosomal stalk which helps the ribosome interact with GTP-bound translation factors. Is thus essential for accurate translation. The polypeptide is Large ribosomal subunit protein bL12 (Clostridium acetobutylicum (strain ATCC 824 / DSM 792 / JCM 1419 / IAM 19013 / LMG 5710 / NBRC 13948 / NRRL B-527 / VKM B-1787 / 2291 / W)).